A 379-amino-acid chain; its full sequence is MTAIRYEFIKTCKQTGARLGRVHTPHGSFDTPTFMPVGTLATVKTMSPEELKAMDSGIILSNTYHLWLRPGHEIVREAGGLHKFMNWDRAILTDSGGFQVFSLSDFRRIEEEGVHFRNHLNGDKLFLSPEKAMEIQNALGSDIMMAFDECPPFPATFEYMKKSVERTSRWAERCLKAHERPQDQGLFGIVQGGEFEELRRQSAKDLVSMDFPGYAIGGLSVGEPKDIMNRVLEFTTPLLPDDKPRYLMGVGSPDSLIDGAIRGVDMFDCVLPTRIARNGTCMTSEGRLVVKNAKFARDFGPLDPNCDCYTCKNYSRAYIRHLMKCDETFGIRLTSYHNLHFLLNLMEQVRQAIREDRLGDFREEFFEQYGFNKPNAKNF.

The Proton acceptor role is filled by D94. Substrate contacts are provided by residues 94 to 98 (DSGGF), D148, Q191, and G218. Residues 249–255 (GVGSPDS) are RNA binding. The Nucleophile role is filled by D268. The RNA binding; important for wobble base 34 recognition stretch occupies residues 273-277 (TRIAR). Residues C306, C308, C311, and H337 each coordinate Zn(2+).

The protein belongs to the queuine tRNA-ribosyltransferase family. As to quaternary structure, homodimer. Within each dimer, one monomer is responsible for RNA recognition and catalysis, while the other monomer binds to the replacement base PreQ1. Requires Zn(2+) as cofactor.

It catalyses the reaction 7-aminomethyl-7-carbaguanine + guanosine(34) in tRNA = 7-aminomethyl-7-carbaguanosine(34) in tRNA + guanine. The protein operates within tRNA modification; tRNA-queuosine biosynthesis. Its function is as follows. Catalyzes the base-exchange of a guanine (G) residue with the queuine precursor 7-aminomethyl-7-deazaguanine (PreQ1) at position 34 (anticodon wobble position) in tRNAs with GU(N) anticodons (tRNA-Asp, -Asn, -His and -Tyr). Catalysis occurs through a double-displacement mechanism. The nucleophile active site attacks the C1' of nucleotide 34 to detach the guanine base from the RNA, forming a covalent enzyme-RNA intermediate. The proton acceptor active site deprotonates the incoming PreQ1, allowing a nucleophilic attack on the C1' of the ribose to form the product. After dissociation, two additional enzymatic reactions on the tRNA convert PreQ1 to queuine (Q), resulting in the hypermodified nucleoside queuosine (7-(((4,5-cis-dihydroxy-2-cyclopenten-1-yl)amino)methyl)-7-deazaguanosine). This Bacillus mycoides (strain KBAB4) (Bacillus weihenstephanensis) protein is Queuine tRNA-ribosyltransferase.